The sequence spans 300 residues: Haloalkane dehalogenase 1 (300 aa).

The 130-residue stretch at Pro47–Ala176 folds into the AB hydrolase-1 domain. Asp123 acts as the Nucleophile in catalysis. The active-site Proton donor is Asp250. The Proton acceptor role is filled by His279.

This sequence belongs to the haloalkane dehalogenase family. Type 1 subfamily. In terms of assembly, monomer.

The catalysed reaction is 1-haloalkane + H2O = a halide anion + a primary alcohol + H(+). Functionally, catalyzes hydrolytic cleavage of carbon-halogen bonds in halogenated aliphatic compounds, leading to the formation of the corresponding primary alcohols, halide ions and protons. This is Haloalkane dehalogenase 1 (dhmA1) from Mycobacterium bovis (strain ATCC BAA-935 / AF2122/97).